The following is a 293-amino-acid chain: tRNA pseudouridine synthase B (293 aa).

The Nucleophile role is filled by aspartate 39.

Belongs to the pseudouridine synthase TruB family. Type 1 subfamily.

It carries out the reaction uridine(55) in tRNA = pseudouridine(55) in tRNA. Functionally, responsible for synthesis of pseudouridine from uracil-55 in the psi GC loop of transfer RNAs. This chain is tRNA pseudouridine synthase B, found in Rickettsia bellii (strain RML369-C).